The following is a 401-amino-acid chain: 8-amino-7-oxononanoate synthase (401 aa).

Position 24 (R24) interacts with substrate. Position 111–112 (111–112) interacts with pyridoxal 5'-phosphate; it reads GF. H137 contributes to the substrate binding site. S183, H211, and T240 together coordinate pyridoxal 5'-phosphate. Residue K243 is modified to N6-(pyridoxal phosphate)lysine. Residue T357 coordinates substrate.

The protein belongs to the class-II pyridoxal-phosphate-dependent aminotransferase family. BioF subfamily. Homodimer. Requires pyridoxal 5'-phosphate as cofactor.

It catalyses the reaction 6-carboxyhexanoyl-[ACP] + L-alanine + H(+) = (8S)-8-amino-7-oxononanoate + holo-[ACP] + CO2. It participates in cofactor biosynthesis; biotin biosynthesis. Catalyzes the decarboxylative condensation of pimeloyl-[acyl-carrier protein] and L-alanine to produce 8-amino-7-oxononanoate (AON), [acyl-carrier protein], and carbon dioxide. The polypeptide is 8-amino-7-oxononanoate synthase (Xylella fastidiosa (strain M12)).